A 230-amino-acid chain; its full sequence is Large ribosomal subunit protein uL1 (230 aa).

It belongs to the universal ribosomal protein uL1 family. In terms of assembly, part of the 50S ribosomal subunit.

Functionally, binds directly to 23S rRNA. The L1 stalk is quite mobile in the ribosome, and is involved in E site tRNA release. Its function is as follows. Protein L1 is also a translational repressor protein, it controls the translation of the L11 operon by binding to its mRNA. The polypeptide is Large ribosomal subunit protein uL1 (Leuconostoc mesenteroides subsp. mesenteroides (strain ATCC 8293 / DSM 20343 / BCRC 11652 / CCM 1803 / JCM 6124 / NCDO 523 / NBRC 100496 / NCIMB 8023 / NCTC 12954 / NRRL B-1118 / 37Y)).